The following is a 132-amino-acid chain: Chemokine-like protein TAFA-5 (132 aa).

Positions 1–43 are cleaved as a signal peptide; the sequence is MAPSPRTGSRQDATALPSMSSTFWAFMILASLLIAYCSQLAAG. N-linked (GlcNAc...) asparagine glycosylation occurs at asparagine 113.

The protein belongs to the TAFA family. As to expression, expressed in the subcutaneous and perirenal adipose tissue (at protein level). Highly expressed in adipose tissue with moderate expression in the brain and ovary. Isoform 2: Brain-specific.

The protein localises to the secreted. In terms of biological role, acts as a chemokine-like protein by regulating cell proliferation and migration through activation of G protein-coupled receptors (GPCRs), such as S1PR2 and FPR2. Stimulates chemotactic migration of macrophages mediated by the MAPK3/ERK1 and AKT1 pathway. Blocks TNFSF11/RANKL-induced osteoclast formation from macrophages by inhibiting up-regulation of osteoclast fusogenic and differentiation genes. Stimulation of macrophage migration and inhibition of osteoclast formation is mediated via GPCR FPR2. Acts as an adipokine by negatively regulating vascular smooth muscle cell (VSMC) proliferation and migration in response to platelet-derived growth factor stimulation via GPCR S1PR2 and G protein GNA12/GNA13-transmitted RHOA signaling. Inhibits injury-induced cell proliferation and neointima formation in the femoral arteries. In Homo sapiens (Human), this protein is Chemokine-like protein TAFA-5.